Consider the following 31-residue polypeptide: Photosystem II reaction center protein T (31 aa).

Residues 3–23 (SFAYVLILTLAIATLFFAIAF) traverse the membrane as a helical segment.

Belongs to the PsbT family. As to quaternary structure, PSII is composed of 1 copy each of membrane proteins PsbA, PsbB, PsbC, PsbD, PsbE, PsbF, PsbH, PsbI, PsbJ, PsbK, PsbL, PsbM, PsbT, PsbX, PsbY, PsbZ, Psb30/Ycf12, peripheral proteins PsbO, CyanoQ (PsbQ), PsbU, PsbV and a large number of cofactors. It forms dimeric complexes.

It is found in the cellular thylakoid membrane. In terms of biological role, found at the monomer-monomer interface of the photosystem II (PS II) dimer, plays a role in assembly and dimerization of PSII. PSII is a light-driven water plastoquinone oxidoreductase, using light energy to abstract electrons from H(2)O, generating a proton gradient subsequently used for ATP formation. The sequence is that of Photosystem II reaction center protein T from Parasynechococcus marenigrum (strain WH8102).